Consider the following 343-residue polypeptide: 4-hydroxy-2-oxovalerate aldolase (343 aa).

The Pyruvate carboxyltransferase domain occupies 4–254; sequence PRLTDTTLRD…NPGLDVFSLM (251 aa). Substrate is bound at residue 12 to 13; that stretch reads RD. Asp13 provides a ligand contact to Mn(2+). His16 (proton acceptor) is an active-site residue. Positions 166 and 193 each coordinate substrate. Mn(2+)-binding residues include His193 and His195. A substrate-binding site is contributed by Tyr284.

The protein belongs to the 4-hydroxy-2-oxovalerate aldolase family.

It carries out the reaction (S)-4-hydroxy-2-oxopentanoate = acetaldehyde + pyruvate. This Chloroflexus aurantiacus (strain ATCC 29364 / DSM 637 / Y-400-fl) protein is 4-hydroxy-2-oxovalerate aldolase.